Reading from the N-terminus, the 97-residue chain is Co-chaperonin GroES (97 aa).

It belongs to the GroES chaperonin family. In terms of assembly, heptamer of 7 subunits arranged in a ring. Interacts with the chaperonin GroEL.

It localises to the cytoplasm. Functionally, together with the chaperonin GroEL, plays an essential role in assisting protein folding. The GroEL-GroES system forms a nano-cage that allows encapsulation of the non-native substrate proteins and provides a physical environment optimized to promote and accelerate protein folding. GroES binds to the apical surface of the GroEL ring, thereby capping the opening of the GroEL channel. The polypeptide is Co-chaperonin GroES (Buchnera aphidicola subsp. Tuberolachnus salignus).